The chain runs to 600 residues: DNA mismatch repair protein MutL (600 aa).

Belongs to the DNA mismatch repair MutL/HexB family.

This protein is involved in the repair of mismatches in DNA. It is required for dam-dependent methyl-directed DNA mismatch repair. May act as a 'molecular matchmaker', a protein that promotes the formation of a stable complex between two or more DNA-binding proteins in an ATP-dependent manner without itself being part of a final effector complex. This Rickettsia typhi (strain ATCC VR-144 / Wilmington) protein is DNA mismatch repair protein MutL.